Reading from the N-terminus, the 503-residue chain is Probable inactive beta-glucosidase 33 (503 aa).

A signal peptide spans Met1–Ala30. A beta-D-glucoside is bound by residues Gln50, His150, and Asn195–Gln196. Cys215 and Cys223 are joined by a disulfide. N-linked (GlcNAc...) asparagine glycosylation is present at Asn222. A beta-D-glucoside is bound by residues Tyr339 and Glu399. Glu399 serves as the catalytic Nucleophile. A glycan (N-linked (GlcNAc...) asparagine) is linked at Asn436. A beta-D-glucoside is bound by residues Trp446, Glu453–Phe454, and Phe462.

This sequence belongs to the glycosyl hydrolase 1 family.

The polypeptide is Probable inactive beta-glucosidase 33 (BGLU33) (Oryza sativa subsp. japonica (Rice)).